The chain runs to 583 residues: Selenocysteine-specific elongation factor (583 aa).

The tr-type G domain maps to 5–203 (RVNVNVGVLG…LLKSQISIPT (199 aa)). The segment at 14-21 (GHIDSGKT) is G1. GTP-binding residues include Gly19, Thr21, and Ala22. Thr21 contributes to the Mg(2+) binding site. The G2 stretch occupies residues 46–50 (GITLD). Mg(2+) is bound by residues Thr48 and Asp78. Residues 78–81 (DCPG) are G3. The segment at 132 to 135 (NKID) is G4. Residues Asp135 and Lys173 each coordinate GTP. Residues 171–173 (AAK) form a G5 region. A disordered region spans residues 371–390 (MPTATEGDDEADPKAGHAPG). The residue at position 524 (Ser524) is a Phosphoserine. Residues 528-562 (KKILTPTLKKRSRAGRGETTKPEEGTERPEPIQPV) are disordered. Thr532 is modified (phosphothreonine). Residues 534–540 (TLKKRSR) carry the Nuclear localization signal motif. The segment covering 542–557 (GRGETTKPEEGTERPE) has biased composition (basic and acidic residues). Arg543 carries the omega-N-methylarginine modification.

This sequence belongs to the TRAFAC class translation factor GTPase superfamily. Classic translation factor GTPase family. SelB subfamily. It depends on Mg(2+) as a cofactor. Mn(2+) is required as a cofactor.

The protein localises to the cytoplasm. Its subcellular location is the nucleus. The enzyme catalyses GTP + H2O = GDP + phosphate + H(+). In terms of biological role, translation factor required for the incorporation of the rare amino acid selenocysteine encoded by UGA codons. Replaces the eRF1-eRF3-GTP ternary complex for the insertion of selenocysteine directed by the UGA codon. Insertion of selenocysteine at UGA codons is mediated by SECISBP2 and EEFSEC: SECISBP2 (1) specifically binds the SECIS sequence once the 80S ribosome encounters an in-frame UGA codon and (2) contacts the RPS27A/eS31 of the 40S ribosome before ribosome stalling. (3) GTP-bound EEFSEC then delivers selenocysteinyl-tRNA(Sec) to the 80S ribosome and adopts a preaccommodated state conformation. (4) After GTP hydrolysis, EEFSEC dissociates from the assembly, selenocysteinyl-tRNA(Sec) accommodates, and peptide bond synthesis and selenoprotein elongation occur. The protein is Selenocysteine-specific elongation factor (Eefsec) of Mus musculus (Mouse).